The sequence spans 219 residues: Salivary IL-4-inducing protein (219 aa).

Residues 1–19 form the signal peptide; that stretch reads MKYLLTLLMALSLVNLMLT. Residues 19-109 are disordered; the sequence is TRPTPEDDGG…KNDPRETYNK (91 aa). Positions 30–43 are enriched in low complexity; sequence SEEPQTQETTGETT. Basic and acidic residues predominate over residues 72 to 107; that stretch reads DDTAKKEDDGESKDGEGSEKSDKEKGEPKNDPRETY.

As to expression, salivary gland (at protein level).

Its subcellular location is the secreted. Functionally, induces expression of IL4 in host skin by diverting host CD4 cells away from Th1 and towards Th2 responsiveness. Induces expression of IL10 in host skin. Down-regulates expression of IL12B, IFN-gamma (IFNG) and TNF-alpha (TNF) in host skin. This is Salivary IL-4-inducing protein from Aedes aegypti (Yellowfever mosquito).